A 376-amino-acid polypeptide reads, in one-letter code: Peroxisomal membrane protein PEX14 (376 aa).

A compositionally biased stretch (polar residues) spans Met1–Gln12. The tract at residues Met1–Pro24 is disordered. At Ala2 the chain carries N-acetylalanine. Topologically, residues Ala2–Asp108 are peroxisomal. Position 34 is an N6-acetyllysine (Lys34). The interval Ser70–Arg102 is disordered. Over residues Pro88 to Tyr99 the composition is skewed to pro residues. Residues Tyr109–Tyr127 traverse the membrane as a helical segment. The Cytoplasmic segment spans residues Lys128–Asp376. Residues Pro230–Asp376 form a disordered region. Ser232 carries the post-translational modification Phosphoserine. 2 stretches are compositionally biased toward low complexity: residues Ser247 to His259 and Ser265 to Ser275. A phosphoserine mark is found at Ser282 and Ser334. Residues Lys323 to Val341 show a composition bias toward acidic residues. Residues Gln359 to Asp376 show a composition bias toward basic and acidic residues.

The protein belongs to the peroxin-14 family. In terms of assembly, interacts with PEX13; forming the PEX13-PEX14 docking complex. Interacts with PEX5 (via WxxxF/Y motifs). Interacts with PEX19. Interacts with tubulin.

It localises to the peroxisome membrane. Functionally, component of the PEX13-PEX14 docking complex, a translocon channel that specifically mediates the import of peroxisomal cargo proteins bound to PEX5 receptor. The PEX13-PEX14 docking complex forms a large import pore which can be opened to a diameter of about 9 nm. Mechanistically, PEX5 receptor along with cargo proteins associates with the PEX14 subunit of the PEX13-PEX14 docking complex in the cytosol, leading to the insertion of the receptor into the organelle membrane with the concomitant translocation of the cargo into the peroxisome matrix. Plays a key role for peroxisome movement through a direct interaction with tubulin. The protein is Peroxisomal membrane protein PEX14 of Mus musculus (Mouse).